The chain runs to 344 residues: Uroporphyrinogen decarboxylase (344 aa).

Substrate contacts are provided by residues 26-30 (RQAGR), D76, Y152, S207, and H323.

Belongs to the uroporphyrinogen decarboxylase family. In terms of assembly, homodimer.

It localises to the cytoplasm. The enzyme catalyses uroporphyrinogen III + 4 H(+) = coproporphyrinogen III + 4 CO2. Its pathway is porphyrin-containing compound metabolism; protoporphyrin-IX biosynthesis; coproporphyrinogen-III from 5-aminolevulinate: step 4/4. Catalyzes the decarboxylation of four acetate groups of uroporphyrinogen-III to yield coproporphyrinogen-III. This chain is Uroporphyrinogen decarboxylase, found in Hyphomonas neptunium (strain ATCC 15444).